A 265-amino-acid chain; its full sequence is Small ribosomal subunit protein eS4 (265 aa).

Positions 42–104 constitute an S4 RNA-binding domain; the sequence is LPLILIIRNR…TGENYRLLYD (63 aa).

This sequence belongs to the eukaryotic ribosomal protein eS4 family.

It localises to the cytoplasm. The sequence is that of Small ribosomal subunit protein eS4 (RPS4) from Oryza sativa subsp. japonica (Rice).